Reading from the N-terminus, the 422-residue chain is Histidine--tRNA ligase (422 aa).

It belongs to the class-II aminoacyl-tRNA synthetase family. As to quaternary structure, homodimer.

It is found in the cytoplasm. It carries out the reaction tRNA(His) + L-histidine + ATP = L-histidyl-tRNA(His) + AMP + diphosphate + H(+). The polypeptide is Histidine--tRNA ligase (Vesicomyosocius okutanii subsp. Calyptogena okutanii (strain HA)).